A 214-amino-acid polypeptide reads, in one-letter code: Thymidylate kinase (214 aa).

Residue 14–21 coordinates ATP; it reads GLEGAGKT.

Belongs to the thymidylate kinase family.

It carries out the reaction dTMP + ATP = dTDP + ADP. Phosphorylation of dTMP to form dTDP in both de novo and salvage pathways of dTTP synthesis. The protein is Thymidylate kinase of Mannheimia succiniciproducens (strain KCTC 0769BP / MBEL55E).